A 237-amino-acid polypeptide reads, in one-letter code: MRFFPPLEQGRLLRRYKRFLADIELTSGEQMTIHCPNTGSMLNCMREGGLVWFSRSNDPKRKLPGTWEISETPQGRLACVNTGRANALVEEALRAGTIAELAGFTALKREVAYGEEGSRIDFRLEFDGAPVYVEVKSVTLGYPDTAVAAFPDAVTQRGAKHLRELAKLARQGVRAVQLYCVNLTDVEAVRPAEEIDAAYAQALRAAVADGVEVLAYGTRLDAEGIVIDRRLPVLLNP.

This sequence belongs to the SfsA family.

The protein is Sugar fermentation stimulation protein homolog of Pseudomonas putida (strain GB-1).